The chain runs to 170 residues: MNGFSHFNEQGRAQMVDISEKSSTVRTAAAVSSVHMKNEVYEKIQSHDIGKGDVLAVAQVAGIMAAKQTSNIIPMCHPLSLSGVDISFDWKIKEAEVILHIKAQVKTKGSTGVEMEALTSASVCALTVYDMCKALDKGMVIGPTFLLEKTGGKNGDFKRELSEYNLEDQK.

Substrate is bound by residues 75–77 (MCH) and 115–116 (ME). The active site involves aspartate 130.

Belongs to the MoaC family. As to quaternary structure, homohexamer; trimer of dimers.

It catalyses the reaction (8S)-3',8-cyclo-7,8-dihydroguanosine 5'-triphosphate = cyclic pyranopterin phosphate + diphosphate. It functions in the pathway cofactor biosynthesis; molybdopterin biosynthesis. Its function is as follows. Catalyzes the conversion of (8S)-3',8-cyclo-7,8-dihydroguanosine 5'-triphosphate to cyclic pyranopterin monophosphate (cPMP). The protein is Cyclic pyranopterin monophosphate synthase of Bacillus subtilis (strain 168).